Here is a 193-residue protein sequence, read N- to C-terminus: MELCTRSTTIITHLPASFNGHGYLAGKSVDRISLPLQRNVASLVLQSRTLRCSRKFPGETVTEETSTGVNEFGVEDRDGVVVAAEEKNSNSEAPQAEDEETQALEFLNDIKLDSDKTYSILLYGSGAIVALYLTSAIVSSLEAIPLFPKLMEVVGLGYTLWFTTRYLLFKRNREELKTKVSEIKKQVLGSDSE.

Residues 1 to 51 constitute a chloroplast transit peptide; sequence MELCTRSTTIITHLPASFNGHGYLAGKSVDRISLPLQRNVASLVLQSRTLR. At 52-117 the chain is on the stromal side; it reads CSRKFPGETV…NDIKLDSDKT (66 aa). A helical membrane pass occupies residues 118-138; it reads YSILLYGSGAIVALYLTSAIV. Residues 139–142 are Lumenal-facing; that stretch reads SSLE. The chain crosses the membrane as a helical span at residues 143–163; the sequence is AIPLFPKLMEVVGLGYTLWFT. Residues 164–193 are Stromal-facing; that stretch reads TRYLLFKRNREELKTKVSEIKKQVLGSDSE.

The protein belongs to the CURT family. In terms of assembly, homo- and heterodimers and trimers.

It localises to the plastid. The protein localises to the chloroplast thylakoid membrane. Determines thylakoid architecture by inducing membrane curvature. The polypeptide is Protein CURVATURE THYLAKOID 1D, chloroplastic (CURT1D) (Arabidopsis thaliana (Mouse-ear cress)).